A 187-amino-acid polypeptide reads, in one-letter code: Threonylcarbamoyl-AMP synthase (187 aa).

Positions 4-187 (TLTLSEAVTA…DARSGHILRL (184 aa)) constitute a YrdC-like domain.

Belongs to the SUA5 family. TsaC subfamily.

It is found in the cytoplasm. The enzyme catalyses L-threonine + hydrogencarbonate + ATP = L-threonylcarbamoyladenylate + diphosphate + H2O. In terms of biological role, required for the formation of a threonylcarbamoyl group on adenosine at position 37 (t(6)A37) in tRNAs that read codons beginning with adenine. Catalyzes the conversion of L-threonine, HCO(3)(-)/CO(2) and ATP to give threonylcarbamoyl-AMP (TC-AMP) as the acyladenylate intermediate, with the release of diphosphate. This Xylella fastidiosa (strain M23) protein is Threonylcarbamoyl-AMP synthase.